Consider the following 434-residue polypeptide: Protein phosphatase 2C 56 (434 aa).

The PPM-type phosphatase domain occupies 128 to 422; sequence LYGFTSICGR…DNISVVVVDL (295 aa). Mg(2+)-binding residues include aspartate 177, aspartate 261, serine 262, aspartate 347, and aspartate 413. A Nuclear localization signal motif is present at residues 423 to 427; sequence KPRRK.

Belongs to the PP2C family. In terms of assembly, interacts with SPK1, ATHB-6, CIPK15/PKS3, GPX3, SRK2E/OST1, SRK2D, SRK2I, SCAR1, SCAR2, SCAR3 and SCARL. Binds to the PA released by the phospholipase D alpha 1 (PLDALPHA1) in response to ABA during the stomatal closure regulation. Interacts with ABA-bounded PYR1, PYL1, PYL2, PYL3, PYL4, PYL5, PYL6, PYL7, PYL8, PYL9, PYL10, and with free PYL2, PYL3, PYL4 and PYL13. Binds to RPL12B, CPK21 and CPK23. Binds to MAPKKK18. Interacts with KIN10. Interacts with phosphorylated PYL8/RCAR3. Requires Mg(2+) as cofactor. It depends on Mn(2+) as a cofactor. Expressed in seeds and seedlings. In roots, confined to lateral root caps and columella cells.

It localises to the nucleus. Its subcellular location is the cytoplasm. It is found in the cell membrane. The enzyme catalyses O-phospho-L-seryl-[protein] + H2O = L-seryl-[protein] + phosphate. It carries out the reaction O-phospho-L-threonyl-[protein] + H2O = L-threonyl-[protein] + phosphate. Phosphatase activity repressed by oxidized GPX3 and phosphatidic acid (PA). PA is produced by PLD alpha 1 in response to ABA. Repressed by PYR/PYL/RCAR ABA receptors in an ABA-dependent manner. In terms of biological role, key component and repressor of the abscisic acid (ABA) signaling pathway that regulates numerous ABA responses, such as stomatal closure, osmotic water permeability of the plasma membrane (Pos), drought-induced resistance and rhizogenesis, response to glucose, high light stress, seed germination and inhibition of vegetative growth. During the stomatal closure regulation, modulates the inward calcium-channel permeability as well as the actin reorganization in guard cells in response to ABA. Involved in the resistance to the bacterial pathogen Pseudomonas syringae pv. tomato. Controls negatively fibrillin expression that is involved in mediating ABA-induced photoprotection. May be involved in ABA content regulation. Plays a role in the Pro accumulation in response to reduced water availability (low water potential). Required for the ABA negative regulation of the ethylene-induced hyponastic growth. Involved in acquired thermotolerance of root growth and seedling survival. Activates/represses SRK2E/OST1 in response to ABA-dependent stimuli, especially in stomata closure regulation involving SLAC1. Represses MAPKKK18 activity and promotes MAPKKK18 degradation by the proteasome pathway upon abscisic acid (ABA) treatment. Represses KIN10 activity by the specific dephosphorylation of its T-loop Thr-198, leading to a poststress inactivation of SnRK1 signaling. Restricts MAPKKK20 activity by dephosphorylation. This chain is Protein phosphatase 2C 56, found in Arabidopsis thaliana (Mouse-ear cress).